The chain runs to 190 residues: Xanthine phosphoribosyltransferase (190 aa).

Leucine 20 and asparagine 27 together coordinate xanthine. 5-phospho-alpha-D-ribose 1-diphosphate is bound at residue alanine 128–alanine 132. Lysine 156 is a xanthine binding site.

This sequence belongs to the purine/pyrimidine phosphoribosyltransferase family. Xpt subfamily. In terms of assembly, homodimer.

The protein localises to the cytoplasm. It catalyses the reaction XMP + diphosphate = xanthine + 5-phospho-alpha-D-ribose 1-diphosphate. It participates in purine metabolism; XMP biosynthesis via salvage pathway; XMP from xanthine: step 1/1. Its function is as follows. Converts the preformed base xanthine, a product of nucleic acid breakdown, to xanthosine 5'-monophosphate (XMP), so it can be reused for RNA or DNA synthesis. The sequence is that of Xanthine phosphoribosyltransferase from Pseudomonas aeruginosa (strain ATCC 15692 / DSM 22644 / CIP 104116 / JCM 14847 / LMG 12228 / 1C / PRS 101 / PAO1).